Consider the following 550-residue polypeptide: Chaperonin GroEL (550 aa).

Residues 30–33 (TLGP), K51, 87–91 (DGTTT), G414, and D494 each bind ATP.

It belongs to the chaperonin (HSP60) family. Forms a cylinder of 14 subunits composed of two heptameric rings stacked back-to-back. Interacts with the co-chaperonin GroES.

The protein resides in the cytoplasm. The enzyme catalyses ATP + H2O + a folded polypeptide = ADP + phosphate + an unfolded polypeptide.. Functionally, together with its co-chaperonin GroES, plays an essential role in assisting protein folding. The GroEL-GroES system forms a nano-cage that allows encapsulation of the non-native substrate proteins and provides a physical environment optimized to promote and accelerate protein folding. In Buchnera aphidicola subsp. Thelaxes suberi, this protein is Chaperonin GroEL.